A 112-amino-acid polypeptide reads, in one-letter code: Replication initiation control protein YabA (112 aa).

Zn(2+) is bound by residues H85, C87, C101, and C104.

It belongs to the YabA family. Homotetramer. Interacts with both DnaA and DnaN, acting as a bridge between these two proteins. Requires Zn(2+) as cofactor.

The protein resides in the cytoplasm. The protein localises to the nucleoid. Its function is as follows. Involved in control of chromosome replication initiation. Inhibits the cooperative binding of DnaA to the oriC region, thus negatively regulating initiation of chromosome replication. Inhibits the ability of DnaA-ATP to form a helix on DNA; does not disassemble preformed DnaA-DNA helices. Decreases the residence time of DnaA on the chromosome at its binding sites (oriC, replication forks and promoter-binding sites). Tethers DnaA to the replication machinery via the DNA polymerase beta sliding clamp subunit (dnaN). Associates with oriC and other DnaA targets on the chromosome in a DnaA-dependent manner. The polypeptide is Replication initiation control protein YabA (Lacticaseibacillus casei (strain BL23) (Lactobacillus casei)).